Reading from the N-terminus, the 459-residue chain is Putrescine aminotransferase (459 aa).

Residues 150–151 and Q274 contribute to the pyridoxal 5'-phosphate site; that span reads GT. Residue K300 is modified to N6-(pyridoxal phosphate)lysine. T332 contacts pyridoxal 5'-phosphate.

This sequence belongs to the class-III pyridoxal-phosphate-dependent aminotransferase family. Putrescine aminotransferase subfamily. Requires pyridoxal 5'-phosphate as cofactor.

It carries out the reaction an alkane-alpha,omega-diamine + 2-oxoglutarate = an omega-aminoaldehyde + L-glutamate. It catalyses the reaction putrescine + 2-oxoglutarate = 1-pyrroline + L-glutamate + H2O. The catalysed reaction is cadaverine + 2-oxoglutarate = 5-aminopentanal + L-glutamate. Its pathway is amine and polyamine degradation; putrescine degradation; 4-aminobutanal from putrescine (transaminase route): step 1/1. Catalyzes the aminotransferase reaction from putrescine to 2-oxoglutarate, leading to glutamate and 4-aminobutanal, which spontaneously cyclizes to form 1-pyrroline. This is the first step in one of two pathways for putrescine degradation, where putrescine is converted into 4-aminobutanoate (gamma-aminobutyrate or GABA) via 4-aminobutanal. Also functions as a cadaverine transaminase in a a L-lysine degradation pathway to succinate that proceeds via cadaverine, glutarate and L-2-hydroxyglutarate. This is Putrescine aminotransferase from Escherichia coli (strain SMS-3-5 / SECEC).